The primary structure comprises 274 residues: NADPH-dependent 7-cyano-7-deazaguanine reductase (274 aa).

A substrate-binding site is contributed by 80–82 (VES). Residue 82-83 (SK) coordinates NADPH. The Thioimide intermediate role is filled by cysteine 181. Aspartate 188 acts as the Proton donor in catalysis. 220–221 (HE) lines the substrate pocket. 249–250 (RG) provides a ligand contact to NADPH.

The protein belongs to the GTP cyclohydrolase I family. QueF type 2 subfamily. In terms of assembly, homodimer.

The protein resides in the cytoplasm. It carries out the reaction 7-aminomethyl-7-carbaguanine + 2 NADP(+) = 7-cyano-7-deazaguanine + 2 NADPH + 3 H(+). Its pathway is tRNA modification; tRNA-queuosine biosynthesis. Functionally, catalyzes the NADPH-dependent reduction of 7-cyano-7-deazaguanine (preQ0) to 7-aminomethyl-7-deazaguanine (preQ1). The sequence is that of NADPH-dependent 7-cyano-7-deazaguanine reductase from Paraburkholderia phytofirmans (strain DSM 17436 / LMG 22146 / PsJN) (Burkholderia phytofirmans).